Consider the following 309-residue polypeptide: D-alanine--D-alanine ligase (309 aa).

The region spanning 104-301 (KQIWQGSDLP…FDALCVEILA (198 aa)) is the ATP-grasp domain. 130–185 (VASLGLPVIIKPVHEGSSIGMSKVEKIEDFAPAIEKATAHDAIVMAEKWITGREYT) contributes to the ATP binding site. Mg(2+)-binding residues include D255, E268, and N270.

It belongs to the D-alanine--D-alanine ligase family. The cofactor is Mg(2+). Requires Mn(2+) as cofactor.

The protein localises to the cytoplasm. It catalyses the reaction 2 D-alanine + ATP = D-alanyl-D-alanine + ADP + phosphate + H(+). The protein operates within cell wall biogenesis; peptidoglycan biosynthesis. Functionally, cell wall formation. In Acinetobacter baylyi (strain ATCC 33305 / BD413 / ADP1), this protein is D-alanine--D-alanine ligase.